Consider the following 100-residue polypeptide: MHLTSREQEKLMLFLAGELAAKRKARGVKLNYPEAIAYIASHLQEAARDGMSVAEVMQYGATLLTVDDVMEGIAEMVHEVQIEATFPDGTKLVTVHNPIR.

This sequence belongs to the urease gamma subunit family. As to quaternary structure, heterotrimer of UreA (gamma), UreB (beta) and UreC (alpha) subunits. Three heterotrimers associate to form the active enzyme.

It localises to the cytoplasm. It catalyses the reaction urea + 2 H2O + H(+) = hydrogencarbonate + 2 NH4(+). The protein operates within nitrogen metabolism; urea degradation; CO(2) and NH(3) from urea (urease route): step 1/1. The protein is Urease subunit gamma of Actinobacillus pleuropneumoniae serotype 5b (strain L20).